Reading from the N-terminus, the 758-residue chain is Dolichyl-phosphooligosaccharide-protein glycotransferase 2 (758 aa).

Topologically, residues 1–6 (MKRRYS) are cytoplasmic. The chain crosses the membrane as a helical span at residues 7–27 (ILIILLVAIFYRMITFRFKYL). The Extracellular segment spans residues 28–92 (LGYDPYFHLA…KVFGVSLTTT (65 aa)). Positions 29–31 (GYD) match the DXD motif 1 motif. Aspartate 31 lines the Mn(2+) pocket. The helical transmembrane segment at 93–113 (FKITPVIFGVLTVIFLYLSLL) threads the bilayer. The Cytoplasmic portion of the chain corresponds to 114-120 (KLYDEKR). The chain crosses the membrane as a helical span at residues 121–141 (AFFGGFFLAISYGHVFRSMAN). Topologically, residues 142–145 (YYRG) are extracellular. Residues arginine 144 and aspartate 146 each coordinate Mn(2+). A DXD motif 2 motif is present at residues 144–146 (RGD). A helical membrane pass occupies residues 146 to 166 (DNYMLFWYSVALLGISLALGI). The Cytoplasmic segment spans residues 167–175 (KKGKWKYKR). 2 helical membrane-spanning segments follow: residues 176–196 (LIFY…WQAY) and 197–217 (YPIF…AFIL). Topologically, residues 218–226 (KKDKYLLDS) are cytoplasmic. A helical transmembrane segment spans residues 227-247 (IILILSTAFGVLLANYLGGIF). Residues 248-281 (GYGMLGYAKWLGKSVAKKLGLEFGYLKDVYLILH) lie on the Extracellular side of the membrane. A helical transmembrane segment spans residues 282-302 (LKYLVPISLSFVLVLILLGFL). Residues 303 to 310 (TKDIRIRS) are Cytoplasmic-facing. A helical transmembrane segment spans residues 311–331 (LFLGIASFIGIIILFKRFEAL). Residues 332–352 (KELSTGFGIFKEAPILETQPT) lie on the Extracellular side of the membrane. Positions 340 to 343 (IFKE) match the TIXE motif motif. The helical transmembrane segment at 353 to 373 (SFKDLWAAFSLSFFLTPLFFI) threads the bilayer. Over 374-379 (RFKKPR) the chain is Cytoplasmic. A helical transmembrane segment spans residues 380-400 (VEDFLTLGLIIPSVYMLKTWT). Position 401 (arginine 401) is a topological domain, extracellular. An a glycophospholipid-binding site is contributed by arginine 401. Residues 402–422 (FLFIGSMAIAIMSGIGIVELY) traverse the membrane as a helical segment. The Cytoplasmic portion of the chain corresponds to 423 to 433 (EAIKPRLNGKK). A helical transmembrane segment spans residues 434-454 (ALATGIITLVILPGVIAGLSF). The Extracellular segment spans residues 455-758 (KEVCSLHPEM…DRGVFRLSYN (304 aa)). The interacts with target acceptor peptide in protein substrate stretch occupies residues 488 to 490 (WWD). A WWDYG motif motif is present at residues 488 to 492 (WWDWG). The short motif at 540 to 547 (DFLKFGAI) is the DK motif element.

The protein belongs to the STT3 family. It depends on Mn(2+) as a cofactor. Mg(2+) serves as cofactor.

It localises to the cell membrane. The catalysed reaction is an archaeal dolichyl phosphooligosaccharide + [protein]-L-asparagine = an archaeal dolichyl phosphate + a glycoprotein with the oligosaccharide chain attached by N-beta-D-glycosyl linkage to a protein L-asparagine.. Its pathway is protein modification; protein glycosylation. In terms of biological role, oligosaccharyl transferase (OST) that catalyzes the initial transfer of a defined glycan (ManNAcXyl(2)GlcAMan(2)GalNAc in Pyrococcus) from the lipid carrier dolichol-monophosphate to an asparagine residue within an Asn-X-Ser/Thr consensus motif in nascent polypeptide chains, the first step in protein N-glycosylation. This Pyrococcus horikoshii (strain ATCC 700860 / DSM 12428 / JCM 9974 / NBRC 100139 / OT-3) protein is Dolichyl-phosphooligosaccharide-protein glycotransferase 2 (aglB2).